Here is a 407-residue protein sequence, read N- to C-terminus: Peptidase T (407 aa).

Residue histidine 82 coordinates Zn(2+). Aspartate 84 is an active-site residue. A Zn(2+)-binding site is contributed by aspartate 143. Glutamate 177 functions as the Proton acceptor in the catalytic mechanism. Residues glutamate 178, aspartate 200, and histidine 382 each contribute to the Zn(2+) site.

It belongs to the peptidase M20B family. It depends on Zn(2+) as a cofactor.

It is found in the cytoplasm. The catalysed reaction is Release of the N-terminal residue from a tripeptide.. Its function is as follows. Cleaves the N-terminal amino acid of tripeptides. The protein is Peptidase T of Streptococcus pyogenes serotype M1.